The sequence spans 380 residues: Cytochrome b (380 aa).

Helical transmembrane passes span 34–54, 78–99, 114–134, and 179–199; these read FGSL…LLAM, WLIR…YLHI, WNTG…GYVL, and FFAL…IHLT. Heme b is bound by residues histidine 84 and histidine 98. Residues histidine 183 and histidine 197 each coordinate heme b. An a ubiquinone-binding site is contributed by histidine 202. The next 4 membrane-spanning stretches (helical) occupy residues 227–247, 289–309, 321–341, and 348–368; these read SKDI…ALLS, LGGV…PFLH, LSQA…WIGS, and FIII…ILLP.

It belongs to the cytochrome b family. As to quaternary structure, the cytochrome bc1 complex contains 11 subunits: 3 respiratory subunits (MT-CYB, CYC1 and UQCRFS1), 2 core proteins (UQCRC1 and UQCRC2) and 6 low-molecular weight proteins (UQCRH/QCR6, UQCRB/QCR7, UQCRQ/QCR8, UQCR10/QCR9, UQCR11/QCR10 and a cleavage product of UQCRFS1). This cytochrome bc1 complex then forms a dimer. Requires heme b as cofactor.

The protein localises to the mitochondrion inner membrane. Its function is as follows. Component of the ubiquinol-cytochrome c reductase complex (complex III or cytochrome b-c1 complex) that is part of the mitochondrial respiratory chain. The b-c1 complex mediates electron transfer from ubiquinol to cytochrome c. Contributes to the generation of a proton gradient across the mitochondrial membrane that is then used for ATP synthesis. This chain is Cytochrome b (MT-CYB), found in Phalcoboenus australis (Striated caracara).